The chain runs to 388 residues: AdoMet-dependent heme synthase (388 aa).

The span at 1–12 (MHNANHPHGNGH) shows a compositional bias: low complexity. Residues 1–29 (MHNANHPHGNGHPAEKKGMGAHSGAMNMP) form a disordered region. One can recognise a Radical SAM core domain in the interval 34–257 (DGSPACRLIA…TSMHLKATCA (224 aa)). 3 residues coordinate [4Fe-4S] cluster: Cys50, Cys54, and Cys57.

Belongs to the radical SAM superfamily. Requires [4Fe-4S] cluster as cofactor.

The enzyme catalyses Fe-coproporphyrin III + 2 S-adenosyl-L-methionine = heme b + 2 5'-deoxyadenosine + 2 L-methionine + 2 CO2. It participates in porphyrin-containing compound metabolism; protoheme biosynthesis. Involved in siroheme-dependent heme b biosynthesis. Catalyzes the conversion of Fe-coproporphyrin III into heme by the oxidative decarboxylation of two propionate side chains. The chain is AdoMet-dependent heme synthase from Oleidesulfovibrio alaskensis (strain ATCC BAA-1058 / DSM 17464 / G20) (Desulfovibrio alaskensis).